Reading from the N-terminus, the 145-residue chain is Deoxyuridine 5'-triphosphate nucleotidohydrolase (145 aa).

Substrate is bound by residues 62 to 64, Asn-75, 79 to 81, and Lys-89; these read RSG and TVD.

This sequence belongs to the dUTPase family. The cofactor is Mg(2+).

It carries out the reaction dUTP + H2O = dUMP + diphosphate + H(+). It participates in pyrimidine metabolism; dUMP biosynthesis; dUMP from dCTP (dUTP route): step 2/2. This enzyme is involved in nucleotide metabolism: it produces dUMP, the immediate precursor of thymidine nucleotides and it decreases the intracellular concentration of dUTP so that uracil cannot be incorporated into DNA. The sequence is that of Deoxyuridine 5'-triphosphate nucleotidohydrolase from Helicobacter pylori (strain Shi470).